We begin with the raw amino-acid sequence, 320 residues long: Protein LATERAL ROOT PRIMORDIUM 1 (320 aa).

The interval 90–110 (QTTVGTSSNNSGSGSGASGTA) is disordered. Positions 112, 115, 123, 128, 132, and 139 each coordinate Zn(2+). The zn(2)-C6 fungal-type; degenerate DNA-binding region spans 112–139 (CQDCGNQAKKECKQRRCRTCCKSRGFDC). The tract at residues 150 to 223 (AARRRERQVM…QDGGGSREAW (74 aa)) is disordered. Residues 168–177 (GSSLSTSSGT) show a composition bias toward low complexity. A compositionally biased stretch (polar residues) spans 193 to 214 (ATSHTSTSNTPPQSFETSSSRQ). A Required for homo- and heterodimerization motif is present at residues 256 to 259 (IGGH).

The protein belongs to the SHI protein family. As to quaternary structure, homodimer. In terms of tissue distribution, restricted to lateral root primordia.

Its subcellular location is the nucleus. In terms of biological role, transcription activator that binds DNA on 5'-ACTCTAC-3' and promotes auxin homeostasis-regulating gene expression (e.g. YUC genes), as well as genes affecting stamen development, cell expansion and timing of flowering. Synergistically with other SHI-related proteins, regulates gynoecium, stamen and leaf development in a dose-dependent manner, controlling apical-basal patterning. Promotes style and stigma formation, and influence vascular development during gynoecium development. May also have a role in the formation and/or maintenance of the shoot apical meristem (SAM). Modulates root growth. This is Protein LATERAL ROOT PRIMORDIUM 1 (LRP1) from Arabidopsis thaliana (Mouse-ear cress).